We begin with the raw amino-acid sequence, 355 residues long: Ubiquinone biosynthesis protein COQ4 homolog, mitochondrial (355 aa).

4 residues coordinate Zn(2+): His-134, Asp-135, His-138, and Glu-150.

The protein belongs to the COQ4 family. As to quaternary structure, component of a multi-subunit COQ enzyme complex. Zn(2+) serves as cofactor.

It is found in the mitochondrion inner membrane. The catalysed reaction is a 4-hydroxy-3-methoxy-5-(all-trans-polyprenyl)benzoate + H(+) = a 2-methoxy-6-(all-trans-polyprenyl)phenol + CO2. It participates in cofactor biosynthesis; ubiquinone biosynthesis. Functionally, lyase that catalyzes the C1-decarboxylation of 4-hydroxy-3-methoxy-5-(all-trans-polyprenyl)benzoic acid into 2-methoxy-6-(all-trans-polyprenyl)phenol during ubiquinone biosynthesis. This Plasmodium vivax (strain Salvador I) protein is Ubiquinone biosynthesis protein COQ4 homolog, mitochondrial.